Consider the following 371-residue polypeptide: Putative glutamate--cysteine ligase 2 (371 aa).

It belongs to the glutamate--cysteine ligase type 2 family. YbdK subfamily.

It catalyses the reaction L-cysteine + L-glutamate + ATP = gamma-L-glutamyl-L-cysteine + ADP + phosphate + H(+). Functionally, ATP-dependent carboxylate-amine ligase which exhibits weak glutamate--cysteine ligase activity. The chain is Putative glutamate--cysteine ligase 2 from Burkholderia thailandensis (strain ATCC 700388 / DSM 13276 / CCUG 48851 / CIP 106301 / E264).